The chain runs to 933 residues: C-1-tetrahydrofolate synthase, cytoplasmic (933 aa).

Positions 1–303 (MWEPQGSLDP…DRLLAPTWPL (303 aa)) are methylenetetrahydrofolate dehydrogenase and cyclohydrolase. Substrate contacts are provided by residues 51–55 (YIRMK) and 98–100 (VQM). NADP(+) is bound by residues 170 to 172 (GRS) and S195. 270-274 (PGGVG) lines the substrate pocket. Residues 304–933 (RPLRITPLSP…TKTGEIEGLF (630 aa)) are formyltetrahydrofolate synthetase. Residue 378-385 (TPLGEGKS) coordinates ATP.

It in the N-terminal section; belongs to the tetrahydrofolate dehydrogenase/cyclohydrolase family. The protein in the C-terminal section; belongs to the formate--tetrahydrofolate ligase family. Homodimer.

It localises to the cytoplasm. It catalyses the reaction (6R)-5,10-methylene-5,6,7,8-tetrahydrofolate + NADP(+) = (6R)-5,10-methenyltetrahydrofolate + NADPH. The enzyme catalyses (6R)-5,10-methenyltetrahydrofolate + H2O = (6R)-10-formyltetrahydrofolate + H(+). The catalysed reaction is (6S)-5,6,7,8-tetrahydrofolate + formate + ATP = (6R)-10-formyltetrahydrofolate + ADP + phosphate. The protein operates within one-carbon metabolism; tetrahydrofolate interconversion. In Spodoptera frugiperda (Fall armyworm), this protein is C-1-tetrahydrofolate synthase, cytoplasmic.